The sequence spans 632 residues: Probable electron transfer flavoprotein-ubiquinone oxidoreductase, mitochondrial (632 aa).

Residue 93–107 (VCIVGAGPAGLSAAI) participates in FAD binding. [4Fe-4S] cluster is bound by residues Cys575, Cys601, Cys604, and Cys607. Positions 592 to 621 (KRFVINSQNCVHCKTCDIKDPLQGIQWKTP) constitute a 4Fe-4S ferredoxin-type domain.

Belongs to the ETF-QO/FixC family. [4Fe-4S] cluster serves as cofactor. It depends on FAD as a cofactor.

The protein localises to the mitochondrion inner membrane. It catalyses the reaction a ubiquinone + reduced [electron-transfer flavoprotein] = a ubiquinol + oxidized [electron-transfer flavoprotein] + H(+). In terms of biological role, accepts electrons from ETF and reduces ubiquinone. In Schizosaccharomyces pombe (strain 972 / ATCC 24843) (Fission yeast), this protein is Probable electron transfer flavoprotein-ubiquinone oxidoreductase, mitochondrial.